A 180-amino-acid chain; its full sequence is Large ribosomal subunit protein uL10 (180 aa).

It belongs to the universal ribosomal protein uL10 family. In terms of assembly, part of the ribosomal stalk of the 50S ribosomal subunit. The N-terminus interacts with L11 and the large rRNA to form the base of the stalk. The C-terminus forms an elongated spine to which L12 dimers bind in a sequential fashion forming a multimeric L10(L12)X complex.

Its function is as follows. Forms part of the ribosomal stalk, playing a central role in the interaction of the ribosome with GTP-bound translation factors. The polypeptide is Large ribosomal subunit protein uL10 (Thermosipho melanesiensis (strain DSM 12029 / CIP 104789 / BI429)).